Here is a 209-residue protein sequence, read N- to C-terminus: Thiamine-phosphate synthase (209 aa).

4-amino-2-methyl-5-(diphosphooxymethyl)pyrimidine is bound by residues Gln-38–Lys-42 and Asn-70. Residues Asp-71 and Asp-90 each contribute to the Mg(2+) site. 4-amino-2-methyl-5-(diphosphooxymethyl)pyrimidine is bound at residue Ser-109. Thr-135–Thr-137 contacts 2-[(2R,5Z)-2-carboxy-4-methylthiazol-5(2H)-ylidene]ethyl phosphate. Lys-138 contacts 4-amino-2-methyl-5-(diphosphooxymethyl)pyrimidine. 2-[(2R,5Z)-2-carboxy-4-methylthiazol-5(2H)-ylidene]ethyl phosphate-binding positions include Gly-165 and Val-185–Ser-186.

The protein belongs to the thiamine-phosphate synthase family. It depends on Mg(2+) as a cofactor.

The catalysed reaction is 2-[(2R,5Z)-2-carboxy-4-methylthiazol-5(2H)-ylidene]ethyl phosphate + 4-amino-2-methyl-5-(diphosphooxymethyl)pyrimidine + 2 H(+) = thiamine phosphate + CO2 + diphosphate. The enzyme catalyses 2-(2-carboxy-4-methylthiazol-5-yl)ethyl phosphate + 4-amino-2-methyl-5-(diphosphooxymethyl)pyrimidine + 2 H(+) = thiamine phosphate + CO2 + diphosphate. It catalyses the reaction 4-methyl-5-(2-phosphooxyethyl)-thiazole + 4-amino-2-methyl-5-(diphosphooxymethyl)pyrimidine + H(+) = thiamine phosphate + diphosphate. It functions in the pathway cofactor biosynthesis; thiamine diphosphate biosynthesis; thiamine phosphate from 4-amino-2-methyl-5-diphosphomethylpyrimidine and 4-methyl-5-(2-phosphoethyl)-thiazole: step 1/1. Functionally, condenses 4-methyl-5-(beta-hydroxyethyl)thiazole monophosphate (THZ-P) and 2-methyl-4-amino-5-hydroxymethyl pyrimidine pyrophosphate (HMP-PP) to form thiamine monophosphate (TMP). This Persephonella marina (strain DSM 14350 / EX-H1) protein is Thiamine-phosphate synthase.